A 268-amino-acid polypeptide reads, in one-letter code: Interleukin-1 beta (268 aa).

The propeptide occupies 1–116; the sequence is MATVPELNCE…WDDDDLLVCD (116 aa).

This sequence belongs to the IL-1 family. As to quaternary structure, monomer. In its precursor form, weakly interacts with full-length MEFV; the mature cytokine does not interact at all. Interacts with integrins ITGAV:ITGBV and ITGA5:ITGB1; integrin-binding is required for IL1B signaling. Interacts with cargo receptor TMED10; the interaction is direct and is required for the secretion of IL1B mature form. Interacts with HSP90AB1; the interaction facilitates cargo translocation into the ERGIC. Interacts with HSP90B1; the interaction facilitates cargo translocation into the ERGIC.

It is found in the cytoplasm. The protein localises to the cytosol. It localises to the secreted. The protein resides in the lysosome. Its subcellular location is the extracellular exosome. Its function is as follows. Potent pro-inflammatory cytokine. Initially discovered as the major endogenous pyrogen, induces prostaglandin synthesis, neutrophil influx and activation, T-cell activation and cytokine production, B-cell activation and antibody production, and fibroblast proliferation and collagen production. Promotes Th17 differentiation of T-cells. Synergizes with IL12/interleukin-12 to induce IFNG synthesis from T-helper 1 (Th1) cells. Plays a role in angiogenesis by inducing VEGF production synergistically with TNF and IL6. Involved in transduction of inflammation downstream of pyroptosis: its mature form is specifically released in the extracellular milieu by passing through the gasdermin-D (GSDMD) pore. This is Interleukin-1 beta from Rattus norvegicus (Rat).